The primary structure comprises 349 residues: Probable dual-specificity RNA methyltransferase RlmN (349 aa).

The Proton acceptor role is filled by glutamate 94. In terms of domain architecture, Radical SAM core spans 100–334 (TETRTTACVS…VKVRRSRGKD (235 aa)). A disulfide bridge connects residues cysteine 107 and cysteine 339. 3 residues coordinate [4Fe-4S] cluster: cysteine 114, cysteine 118, and cysteine 121. S-adenosyl-L-methionine-binding positions include 165–166 (GE), serine 197, 220–222 (SLH), and asparagine 296. Residue cysteine 339 is the S-methylcysteine intermediate of the active site.

Belongs to the radical SAM superfamily. RlmN family. The cofactor is [4Fe-4S] cluster.

It is found in the cytoplasm. It carries out the reaction adenosine(2503) in 23S rRNA + 2 reduced [2Fe-2S]-[ferredoxin] + 2 S-adenosyl-L-methionine = 2-methyladenosine(2503) in 23S rRNA + 5'-deoxyadenosine + L-methionine + 2 oxidized [2Fe-2S]-[ferredoxin] + S-adenosyl-L-homocysteine. The catalysed reaction is adenosine(37) in tRNA + 2 reduced [2Fe-2S]-[ferredoxin] + 2 S-adenosyl-L-methionine = 2-methyladenosine(37) in tRNA + 5'-deoxyadenosine + L-methionine + 2 oxidized [2Fe-2S]-[ferredoxin] + S-adenosyl-L-homocysteine. Its function is as follows. Specifically methylates position 2 of adenine 2503 in 23S rRNA and position 2 of adenine 37 in tRNAs. The sequence is that of Probable dual-specificity RNA methyltransferase RlmN from Flavobacterium johnsoniae (strain ATCC 17061 / DSM 2064 / JCM 8514 / BCRC 14874 / CCUG 350202 / NBRC 14942 / NCIMB 11054 / UW101) (Cytophaga johnsonae).